Here is a 392-residue protein sequence, read N- to C-terminus: Chaperone protein DnaJ (392 aa).

The J domain maps to 2 to 67 (DYYDVLGVSK…QKRESYDRYG (66 aa)). The CR-type zinc finger occupies 149–227 (GVEKELLVSG…CRGQGRIKDK (79 aa)). Residues Cys-162, Cys-165, Cys-179, Cys-182, Cys-201, Cys-204, Cys-215, and Cys-218 each coordinate Zn(2+). 4 CXXCXGXG motif repeats span residues 162-169 (CETCLGSG), 179-186 (CDRCKGSG), 201-208 (CPECGGEG), and 215-222 (CSNCRGQG).

Belongs to the DnaJ family. As to quaternary structure, homodimer. Zn(2+) is required as a cofactor.

Its subcellular location is the cytoplasm. Its function is as follows. Participates actively in the response to hyperosmotic and heat shock by preventing the aggregation of stress-denatured proteins and by disaggregating proteins, also in an autonomous, DnaK-independent fashion. Unfolded proteins bind initially to DnaJ; upon interaction with the DnaJ-bound protein, DnaK hydrolyzes its bound ATP, resulting in the formation of a stable complex. GrpE releases ADP from DnaK; ATP binding to DnaK triggers the release of the substrate protein, thus completing the reaction cycle. Several rounds of ATP-dependent interactions between DnaJ, DnaK and GrpE are required for fully efficient folding. Also involved, together with DnaK and GrpE, in the DNA replication of plasmids through activation of initiation proteins. This Chlamydia caviae (strain ATCC VR-813 / DSM 19441 / 03DC25 / GPIC) (Chlamydophila caviae) protein is Chaperone protein DnaJ.